The chain runs to 174 residues: Phospholipase A2-like protein Y52B11A.8 (174 aa).

An N-terminal signal peptide occupies residues M1–A18. 2 N-linked (GlcNAc...) asparagine glycosylation sites follow: N49 and N143. The interval Y137–T174 is disordered.

The protein belongs to the phospholipase A2 family.

The protein resides in the secreted. This is Phospholipase A2-like protein Y52B11A.8 from Caenorhabditis elegans.